The following is a 218-amino-acid chain: Large ribosomal subunit protein bL25 (218 aa).

Residues 187–218 (SATAAVEEAKEDGAPEESAQGQGAAEAQETGK) are disordered. The segment covering 202 to 218 (EESAQGQGAAEAQETGK) has biased composition (low complexity).

It belongs to the bacterial ribosomal protein bL25 family. CTC subfamily. In terms of assembly, part of the 50S ribosomal subunit; part of the 5S rRNA/L5/L18/L25 subcomplex. Contacts the 5S rRNA. Binds to the 5S rRNA independently of L5 and L18.

Its function is as follows. This is one of the proteins that binds to the 5S RNA in the ribosome where it forms part of the central protuberance. In Anaplasma marginale (strain Florida), this protein is Large ribosomal subunit protein bL25.